The following is a 496-amino-acid chain: Glutamyl-tRNA(Gln) amidotransferase subunit A (496 aa).

Residues K75 and S150 each act as charge relay system in the active site. The active-site Acyl-ester intermediate is S174.

The protein belongs to the amidase family. GatA subfamily. As to quaternary structure, heterotrimer of A, B and C subunits.

It carries out the reaction L-glutamyl-tRNA(Gln) + L-glutamine + ATP + H2O = L-glutaminyl-tRNA(Gln) + L-glutamate + ADP + phosphate + H(+). Its function is as follows. Allows the formation of correctly charged Gln-tRNA(Gln) through the transamidation of misacylated Glu-tRNA(Gln) in organisms which lack glutaminyl-tRNA synthetase. The reaction takes place in the presence of glutamine and ATP through an activated gamma-phospho-Glu-tRNA(Gln). The sequence is that of Glutamyl-tRNA(Gln) amidotransferase subunit A from Burkholderia mallei (strain NCTC 10247).